Here is a 491-residue protein sequence, read N- to C-terminus: Angiopoietin-related protein 1 (491 aa).

A signal peptide spans 1–23 (MKAFIWTLSVLFFLLMGIGHGRG). The stretch at 80 to 168 (ITRMDLENLK…LNVTTEMLKM (89 aa)) forms a coiled coil. N-linked (GlcNAc...) asparagine glycans are attached at residues N160 and N188. Positions 271 to 491 (FINEGPYKDC…AVQMLIKPID (221 aa)) constitute a Fibrinogen C-terminal domain. Disulfide bonds link C280-C309 and C432-C445.

The protein localises to the secreted. This chain is Angiopoietin-related protein 1 (ANGPTL1), found in Bos taurus (Bovine).